Reading from the N-terminus, the 156-residue chain is Small ribosomal subunit protein uS7 (156 aa).

Belongs to the universal ribosomal protein uS7 family. In terms of assembly, part of the 30S ribosomal subunit. Contacts proteins S9 and S11.

Functionally, one of the primary rRNA binding proteins, it binds directly to 16S rRNA where it nucleates assembly of the head domain of the 30S subunit. Is located at the subunit interface close to the decoding center, probably blocks exit of the E-site tRNA. This Vibrio cholerae serotype O1 (strain ATCC 39315 / El Tor Inaba N16961) protein is Small ribosomal subunit protein uS7.